Here is a 995-residue protein sequence, read N- to C-terminus: Polynucleotide 5'-hydroxyl-kinase NOL9 (995 aa).

2 disordered regions span residues 18–173 (EQRE…SSMK) and 271–359 (IKVF…YEPP). Composition is skewed to low complexity over residues 75-94 (TAGAKRPLSNNVSNPDSSPS) and 110-129 (VNKSSNVAAKKSAATSKSAK). The span at 279 to 354 (EETDSDEDDI…DIFDTDDLDS (76 aa)) shows a compositional bias: acidic residues. 639 to 646 (GGKGVGKS) lines the ATP pocket.

It belongs to the Clp1 family. NOL9/GRC3 subfamily.

It localises to the nucleus. The protein localises to the nucleolus. Its function is as follows. Polynucleotide 5'-kinase involved in rRNA processing. The polypeptide is Polynucleotide 5'-hydroxyl-kinase NOL9 (Drosophila melanogaster (Fruit fly)).